The primary structure comprises 207 residues: Large ribosomal subunit protein bL25 (207 aa).

It belongs to the bacterial ribosomal protein bL25 family. CTC subfamily. As to quaternary structure, part of the 50S ribosomal subunit; part of the 5S rRNA/L5/L18/L25 subcomplex. Contacts the 5S rRNA. Binds to the 5S rRNA independently of L5 and L18.

Functionally, this is one of the proteins that binds to the 5S RNA in the ribosome where it forms part of the central protuberance. The chain is Large ribosomal subunit protein bL25 from Orientia tsutsugamushi (strain Ikeda) (Rickettsia tsutsugamushi).